A 232-amino-acid polypeptide reads, in one-letter code: Imidazole glycerol phosphate synthase subunit HisF (232 aa).

Active-site residues include Asp11 and Asp130.

Belongs to the HisA/HisF family. Heterodimer of HisH and HisF.

It is found in the cytoplasm. It carries out the reaction 5-[(5-phospho-1-deoxy-D-ribulos-1-ylimino)methylamino]-1-(5-phospho-beta-D-ribosyl)imidazole-4-carboxamide + L-glutamine = D-erythro-1-(imidazol-4-yl)glycerol 3-phosphate + 5-amino-1-(5-phospho-beta-D-ribosyl)imidazole-4-carboxamide + L-glutamate + H(+). It functions in the pathway amino-acid biosynthesis; L-histidine biosynthesis; L-histidine from 5-phospho-alpha-D-ribose 1-diphosphate: step 5/9. Its function is as follows. IGPS catalyzes the conversion of PRFAR and glutamine to IGP, AICAR and glutamate. The HisF subunit catalyzes the cyclization activity that produces IGP and AICAR from PRFAR using the ammonia provided by the HisH subunit. This is Imidazole glycerol phosphate synthase subunit HisF from Listeria monocytogenes serotype 4a (strain HCC23).